We begin with the raw amino-acid sequence, 340 residues long: Ferrochelatase (340 aa).

Residues histidine 189 and glutamate 292 each coordinate Fe cation.

This sequence belongs to the ferrochelatase family.

It localises to the cytoplasm. It catalyses the reaction heme b + 2 H(+) = protoporphyrin IX + Fe(2+). The protein operates within porphyrin-containing compound metabolism; protoheme biosynthesis; protoheme from protoporphyrin-IX: step 1/1. Its function is as follows. Catalyzes the ferrous insertion into protoporphyrin IX. The sequence is that of Ferrochelatase from Pseudomonas syringae pv. tomato (strain ATCC BAA-871 / DC3000).